A 321-amino-acid chain; its full sequence is Fimbria adhesin protein (321 aa).

An N-terminal signal peptide occupies residues 1–18; the sequence is MKKLTLFIGLMALGTTSA.

Belongs to the fimbrial protein family.

It localises to the fimbrium. This chain is Fimbria adhesin protein (mrkD), found in Klebsiella pneumoniae.